The sequence spans 88 residues: UPF0250 protein SO_1163 (88 aa).

Belongs to the UPF0250 family.

In Shewanella oneidensis (strain ATCC 700550 / JCM 31522 / CIP 106686 / LMG 19005 / NCIMB 14063 / MR-1), this protein is UPF0250 protein SO_1163.